A 366-amino-acid polypeptide reads, in one-letter code: 3-dehydroquinate synthase (366 aa).

NAD(+)-binding positions include 75 to 80 (DGEQYK), 109 to 113 (GVIGD), 133 to 134 (TT), K146, K155, and 173 to 176 (CLST). Positions 188, 251, and 268 each coordinate Zn(2+).

The protein belongs to the sugar phosphate cyclases superfamily. Dehydroquinate synthase family. The cofactor is Co(2+). Requires Zn(2+) as cofactor. NAD(+) serves as cofactor.

The protein resides in the cytoplasm. It catalyses the reaction 7-phospho-2-dehydro-3-deoxy-D-arabino-heptonate = 3-dehydroquinate + phosphate. The protein operates within metabolic intermediate biosynthesis; chorismate biosynthesis; chorismate from D-erythrose 4-phosphate and phosphoenolpyruvate: step 2/7. Functionally, catalyzes the conversion of 3-deoxy-D-arabino-heptulosonate 7-phosphate (DAHP) to dehydroquinate (DHQ). This is 3-dehydroquinate synthase from Vibrio campbellii (strain ATCC BAA-1116).